Reading from the N-terminus, the 180-residue chain is dCTP deaminase, dUMP-forming (180 aa).

DCTP is bound by residues Arg100–Arg105, Asp117, Thr125–Glu127, Gln146, Tyr160, and Gln167. Catalysis depends on Glu127, which acts as the Proton donor/acceptor.

This sequence belongs to the dCTP deaminase family. Homotrimer.

It catalyses the reaction dCTP + 2 H2O = dUMP + NH4(+) + diphosphate. It functions in the pathway pyrimidine metabolism; dUMP biosynthesis; dUMP from dCTP: step 1/1. Functionally, bifunctional enzyme that catalyzes both the deamination of dCTP to dUTP and the hydrolysis of dUTP to dUMP without releasing the toxic dUTP intermediate. This chain is dCTP deaminase, dUMP-forming, found in Sulfurihydrogenibium sp. (strain YO3AOP1).